A 212-amino-acid chain; its full sequence is uncharacterized protein (212 aa).

S-adenosyl-L-methionine-binding residues include Gly53 and Glu74.

This sequence belongs to the methyltransferase superfamily. YrrT family.

In terms of biological role, could be a S-adenosyl-L-methionine-dependent methyltransferase. This is an uncharacterized protein from Exiguobacterium sibiricum (strain DSM 17290 / CCUG 55495 / CIP 109462 / JCM 13490 / 255-15).